Here is a 493-residue protein sequence, read N- to C-terminus: Ectonucleotide pyrophosphatase/phosphodiesterase 2 (493 aa).

The Cytoplasmic portion of the chain corresponds to 1-28; that stretch reads MLLFEQPVDLEKNNEDDTNIKPFAISRH. A helical; Signal-anchor for type II membrane protein membrane pass occupies residues 29–45; the sequence is FLLKLLLCGIILIELLL. The Extracellular segment spans residues 46–493; the sequence is YSKCPKPIDN…KTKKEKSLLQ (448 aa). N-linked (GlcNAc...) asparagine glycans are attached at residues asparagine 62, asparagine 69, and asparagine 112. The tract at residues 76 to 438 is phosphodiesterase; the sequence is TLTILISIDG…IGIMGTHGYN (363 aa). Threonine 127 functions as the Nucleophile in the catalytic mechanism. Asparagine 153 and asparagine 441 each carry an N-linked (GlcNAc...) asparagine glycan.

The protein belongs to the nucleotide pyrophosphatase/phosphodiesterase family. In terms of processing, autophosphorylated as part of the catalytic cycle of phosphodiesterase/pyrophosphatase activity.

It localises to the membrane. It carries out the reaction Hydrolytically removes 5'-nucleotides successively from the 3'-hydroxy termini of 3'-hydroxy-terminated oligonucleotides.. The catalysed reaction is a ribonucleoside 5'-triphosphate + H2O = a ribonucleoside 5'-phosphate + diphosphate + H(+). The enzyme catalyses a 2'-deoxyribonucleoside 5'-triphosphate + H2O = a 2'-deoxyribonucleoside 5'-phosphate + diphosphate + H(+). Its function is as follows. Mediates extracellular nucleotide derived phosphate hydrolysis along with NPP1 and PHO5. This is Ectonucleotide pyrophosphatase/phosphodiesterase 2 (NPP2) from Saccharomyces cerevisiae (strain ATCC 204508 / S288c) (Baker's yeast).